Reading from the N-terminus, the 230-residue chain is dITP/XTP pyrophosphatase (230 aa).

7–12 (STNPGK) lines the substrate pocket. Residues glutamate 41 and aspartate 70 each coordinate Mg(2+). The Proton acceptor role is filled by aspartate 70. Residues serine 71, 181 to 184 (FGYD), lysine 205, and 210 to 211 (HR) each bind substrate.

The protein belongs to the HAM1 NTPase family. As to quaternary structure, homodimer. It depends on Mg(2+) as a cofactor.

The enzyme catalyses XTP + H2O = XMP + diphosphate + H(+). The catalysed reaction is dITP + H2O = dIMP + diphosphate + H(+). It carries out the reaction ITP + H2O = IMP + diphosphate + H(+). Pyrophosphatase that catalyzes the hydrolysis of nucleoside triphosphates to their monophosphate derivatives, with a high preference for the non-canonical purine nucleotides XTP (xanthosine triphosphate), dITP (deoxyinosine triphosphate) and ITP. Seems to function as a house-cleaning enzyme that removes non-canonical purine nucleotides from the nucleotide pool, thus preventing their incorporation into DNA/RNA and avoiding chromosomal lesions. This chain is dITP/XTP pyrophosphatase, found in Anaeromyxobacter sp. (strain Fw109-5).